Reading from the N-terminus, the 520-residue chain is 2-isopropylmalate synthase (520 aa).

Residues Ile12 to Val274 enclose the Pyruvate carboxyltransferase domain. 4 residues coordinate Mn(2+): Asp21, His209, His211, and Asn245. The segment at Arg396–Ala520 is regulatory domain.

The protein belongs to the alpha-IPM synthase/homocitrate synthase family. LeuA type 1 subfamily. As to quaternary structure, homodimer. The cofactor is Mn(2+).

It is found in the cytoplasm. It carries out the reaction 3-methyl-2-oxobutanoate + acetyl-CoA + H2O = (2S)-2-isopropylmalate + CoA + H(+). It participates in amino-acid biosynthesis; L-leucine biosynthesis; L-leucine from 3-methyl-2-oxobutanoate: step 1/4. Functionally, catalyzes the condensation of the acetyl group of acetyl-CoA with 3-methyl-2-oxobutanoate (2-ketoisovalerate) to form 3-carboxy-3-hydroxy-4-methylpentanoate (2-isopropylmalate). The protein is 2-isopropylmalate synthase of Xanthomonas euvesicatoria pv. vesicatoria (strain 85-10) (Xanthomonas campestris pv. vesicatoria).